The chain runs to 213 residues: Nicolin-1 (213 aa).

As to quaternary structure, part of the neuronal tubulin polyglutamylase complex which contains TPGS1, TPGS2, TTLL1, LRRC49 and NICN1. In terms of tissue distribution, high expression level is found in brain, testis, liver and kidney. Weak expression in spleen, leukocytes, small intestine and colon.

The protein localises to the nucleus. The polypeptide is Nicolin-1 (NICN1) (Homo sapiens (Human)).